We begin with the raw amino-acid sequence, 470 residues long: FK506-binding protein 4 (470 aa).

Disordered regions lie at residues 40–101, 114–163, and 210–358; these read DEEP…KEKA, EEAM…GLEL, and PIDP…QTTG. Acidic residues-rich tracts occupy residues 68 to 91, 115 to 131, 150 to 163, and 218 to 254; these read DLEDDSDDDYEDVDSDEESDDEEP, EAMDEDDEDEDEDEDGE, DSDEDDEEDEGLEL, and EDEDEEDEDDYDLSPDEDELALDLMGDDDNESDELDG. Composition is skewed to basic and acidic residues over residues 268-291 and 319-332; these read EPPKLVDTKGKNKRSAPADEEKPA and EQKKEAKEGKEAKK. In terms of domain architecture, PPIase FKBP-type spans 384–470; the sequence is GNTVAMRYIG…IFDVKLLEIK (87 aa).

It belongs to the FKBP-type PPIase family. FKBP3/4 subfamily. Binds to histones H3 and H4.

The protein localises to the nucleus. It catalyses the reaction [protein]-peptidylproline (omega=180) = [protein]-peptidylproline (omega=0). Inhibited by both FK506 and rapamycin. Functionally, PPIase that acts as a histone chaperone. Histone proline isomerase that increases the rate of cis-trans isomerization at prolines on the histone H3 N-terminal tail. Proline isomerization influences H3 methylation thereby regulating gene expression. The polypeptide is FK506-binding protein 4 (fpr4) (Aspergillus oryzae (strain ATCC 42149 / RIB 40) (Yellow koji mold)).